The sequence spans 554 residues: Thermosome subunit alpha (554 aa).

The segment at 530–554 (PKKKEKKGKTGEEEEEEGGGSKFEF) is disordered.

It belongs to the TCP-1 chaperonin family. As to quaternary structure, forms a Heterooligomeric complex of two stacked eight-membered rings.

Functionally, molecular chaperone; binds unfolded polypeptides in vitro, and has a weak ATPase activity. The protein is Thermosome subunit alpha (thsA) of Aeropyrum pernix (strain ATCC 700893 / DSM 11879 / JCM 9820 / NBRC 100138 / K1).